A 508-amino-acid chain; its full sequence is ATP synthase subunit alpha, chloroplastic (508 aa).

170-177 (GDRQTGKT) contacts ATP.

Belongs to the ATPase alpha/beta chains family. As to quaternary structure, F-type ATPases have 2 components, CF(1) - the catalytic core - and CF(0) - the membrane proton channel. CF(1) has five subunits: alpha(3), beta(3), gamma(1), delta(1), epsilon(1). CF(0) has four main subunits: a, b, b' and c.

It is found in the plastid. Its subcellular location is the chloroplast thylakoid membrane. The catalysed reaction is ATP + H2O + 4 H(+)(in) = ADP + phosphate + 5 H(+)(out). Produces ATP from ADP in the presence of a proton gradient across the membrane. The alpha chain is a regulatory subunit. The polypeptide is ATP synthase subunit alpha, chloroplastic (Helianthus annuus (Common sunflower)).